A 65-amino-acid chain; its full sequence is Large ribosomal subunit protein bL35 (65 aa).

The protein belongs to the bacterial ribosomal protein bL35 family.

This is Large ribosomal subunit protein bL35 from Clostridium botulinum (strain Loch Maree / Type A3).